A 246-amino-acid polypeptide reads, in one-letter code: Zorya protein ZorB (246 aa).

The helical transmembrane segment at 20-40 (FWISYADLMTAMMVLFLVVMV) threads the bilayer. Positions 86-218 (CHDNRISFGE…RVELRMQFFG (133 aa)) constitute an OmpA-like domain.

It belongs to the MotB family.

Its subcellular location is the cell inner membrane. Functionally, component of antiviral defense system Zorya type I, composed of ZorA, ZorB, ZorC and ZorD. Expression of Zorya type I in E.coli (strain MG1655) confers 10,000-fold resistance to phage SECphi27, 100-fold resistance to lambda, and 10-fold resistance to T7. While most T7 infected Zorya-containing cells undergo abortive infection, a minority produce viable phage progeny. These eventually accumulate to a high multiplicity of infection, leading to culture collapse by 2 hours after initial infection. ZorA and ZorB probably assemble in the cell inner membrane and exert their effect there. This chain is Zorya protein ZorB, found in Escherichia coli O139:H28 (strain E24377A / ETEC).